A 451-amino-acid chain; its full sequence is Phosphoglucosamine mutase (451 aa).

The active-site Phosphoserine intermediate is serine 102. The Mg(2+) site is built by serine 102, aspartate 243, aspartate 245, and aspartate 247. A Phosphoserine modification is found at serine 102.

This sequence belongs to the phosphohexose mutase family. Mg(2+) is required as a cofactor. In terms of processing, activated by phosphorylation.

It carries out the reaction alpha-D-glucosamine 1-phosphate = D-glucosamine 6-phosphate. In terms of biological role, catalyzes the conversion of glucosamine-6-phosphate to glucosamine-1-phosphate. This chain is Phosphoglucosamine mutase, found in Brucella abortus (strain 2308).